The chain runs to 557 residues: Putative glutathione-regulated potassium-efflux system protein KefB (557 aa).

The next 10 helical transmembrane spans lie at 2 to 22 (LGYL…ISDV), 24 to 44 (EILH…GLEL), 56 to 76 (IFGV…GLLM), 84 to 104 (AAVV…LQLM), 121 to 141 (VLLF…LLAG), 146 to 166 (HFDW…LIGG), 176 to 196 (FIAA…LVLG), 199 to 219 (LFMD…GVLL), 237 to 257 (GLLL…GVLY), and 260 to 280 (LLWV…VLYL). One can recognise an RCK N-terminal domain in the interval 356-475 (KPQVIVVGFG…AGVTQFSRET (120 aa)).

It belongs to the monovalent cation:proton antiporter 2 (CPA2) transporter (TC 2.A.37) family. KefB subfamily. Interacts with the regulatory subunit KefG.

Its subcellular location is the cell inner membrane. In terms of biological role, pore-forming subunit of a potassium efflux system that confers protection against electrophiles. Catalyzes K(+)/H(+) antiport. This Shigella flexneri protein is Putative glutathione-regulated potassium-efflux system protein KefB.